Consider the following 796-residue polypeptide: Conidiophore development regulator abaA (796 aa).

The TEA DNA-binding region spans 133 to 207 (GKDGEPVWSD…QVLDSFLKGD (75 aa)). A disordered region spans residues 215-254 (REQSDRSTAQTQPVGPRWRTSMDHLPSSHYGTHATSSYPE). Residues 243-252 (HYGTHATSSY) are compositionally biased toward polar residues. The segment at 341–362 (LSDVNDPLNCEIILLETNLELM) is leucine-zipper-like. The disordered stretch occupies residues 612–643 (EGLSDKTAPTSVLDPFPNLTQQTTSQTAGINV). The segment covering 629-643 (NLTQQTTSQTAGINV) has biased composition (polar residues).

This sequence belongs to the TEC1 family.

It localises to the nucleus. Functionally, brlA, abaA and wetA are pivotal regulators of conidiophore development and conidium maturation. They act individually and together to regulate their own expression and that of numerous other sporulation-specific gene. Controls temporal and spatial specificity in Aspergillus development. Directs the differentiation of phialides and is continuously required for maintenance of their function. Expression of abaA leads to activation of brlA and wetA, cessation of vegetative growth, and accentuated cellular vacuolization. Binds to the sequence 5'-CATTCY-3', where Y is a pyrimidine, making both major- and minor-groove contacts. Multiple abaA binding sites are present in the cis-acting regulatory regions of several developmentally controlled structural genes as well as those of the upstream regulatory gene brlA, the downstream regulatory gene wetA, and abaA itself. The protein is Conidiophore development regulator abaA of Emericella nidulans (strain FGSC A4 / ATCC 38163 / CBS 112.46 / NRRL 194 / M139) (Aspergillus nidulans).